Consider the following 373-residue polypeptide: Putative ribosome biogenesis protein C8F11.04 (373 aa).

The disordered stretch occupies residues Arg-265 to His-373. Over residues Lys-292–Lys-320 the composition is skewed to basic and acidic residues. The segment covering Lys-347–Thr-359 has biased composition (polar residues). Basic residues predominate over residues Lys-362 to His-373.

Belongs to the universal ribosomal protein uL1 family. Highly divergent. Component of the 90S pre-ribosomes.

It is found in the nucleus. It localises to the nucleolus. Involved in rRNA-processing and ribosome biosynthesis. The chain is Putative ribosome biogenesis protein C8F11.04 from Schizosaccharomyces pombe (strain 972 / ATCC 24843) (Fission yeast).